The primary structure comprises 158 residues: MNTIAPNLDGKHLRIGIVQARFTNEIGSEMLKVCCRTLQELGVADENITVATVPGALEIPIALMNFASSEKFDALIAIGVVIRGETYHFELVSNESGAGVSRVALDYNIPIANAVLTTENDAQAIERIEEKASDAAKVAVECANLVNLLLEEQFEDEE.

5-amino-6-(D-ribitylamino)uracil contacts are provided by residues phenylalanine 22, 56–58 (ALE), and 80–82 (VVI). Position 85-86 (85-86 (ET)) interacts with (2S)-2-hydroxy-3-oxobutyl phosphate. Histidine 88 functions as the Proton donor in the catalytic mechanism. Residue asparagine 113 participates in 5-amino-6-(D-ribitylamino)uracil binding. Arginine 127 serves as a coordination point for (2S)-2-hydroxy-3-oxobutyl phosphate.

The protein belongs to the DMRL synthase family.

It carries out the reaction (2S)-2-hydroxy-3-oxobutyl phosphate + 5-amino-6-(D-ribitylamino)uracil = 6,7-dimethyl-8-(1-D-ribityl)lumazine + phosphate + 2 H2O + H(+). The protein operates within cofactor biosynthesis; riboflavin biosynthesis; riboflavin from 2-hydroxy-3-oxobutyl phosphate and 5-amino-6-(D-ribitylamino)uracil: step 1/2. In terms of biological role, catalyzes the formation of 6,7-dimethyl-8-ribityllumazine by condensation of 5-amino-6-(D-ribitylamino)uracil with 3,4-dihydroxy-2-butanone 4-phosphate. This is the penultimate step in the biosynthesis of riboflavin. This chain is 6,7-dimethyl-8-ribityllumazine synthase, found in Neisseria meningitidis serogroup C (strain 053442).